Reading from the N-terminus, the 158-residue chain is NAD(P)H-quinone oxidoreductase subunit O, chloroplastic (158 aa).

A chloroplast-targeting transit peptide spans 1-38; sequence MAFSATVSQLSSLSTISSSLPISSRRLPHRSLPQFTVK. Positions 33–70 are disordered; it reads PQFTVKAEAEKEKQSTQGKSDGEASPAATKTPKTLPKK. The segment covering 56-70 has biased composition (low complexity); sequence ASPAATKTPKTLPKK.

It belongs to the NDH complex subunit O family. In terms of assembly, part of the chloroplast NDH complex, composed of a mixture of chloroplast and nucleus encoded subunits. Component of the NDH subcomplex A, at least composed of ndhH, ndhI, ndhJ, ndhK, ndhL, ndhM, ndhN and ndhO.

Its subcellular location is the plastid. The protein resides in the chloroplast thylakoid membrane. The catalysed reaction is a plastoquinone + NADH + (n+1) H(+)(in) = a plastoquinol + NAD(+) + n H(+)(out). It catalyses the reaction a plastoquinone + NADPH + (n+1) H(+)(in) = a plastoquinol + NADP(+) + n H(+)(out). Functionally, NDH shuttles electrons from NAD(P)H:plastoquinone, via FMN and iron-sulfur (Fe-S) centers, to quinones in the photosynthetic chain and possibly in a chloroplast respiratory chain. The immediate electron acceptor for the enzyme in this species is believed to be plastoquinone. Couples the redox reaction to proton translocation, and thus conserves the redox energy in a proton gradient. This Arabidopsis thaliana (Mouse-ear cress) protein is NAD(P)H-quinone oxidoreductase subunit O, chloroplastic.